Consider the following 305-residue polypeptide: Methionyl-tRNA formyltransferase (305 aa).

111–114 is a (6S)-5,6,7,8-tetrahydrofolate binding site; that stretch reads SLLP.

The protein belongs to the Fmt family.

The enzyme catalyses L-methionyl-tRNA(fMet) + (6R)-10-formyltetrahydrofolate = N-formyl-L-methionyl-tRNA(fMet) + (6S)-5,6,7,8-tetrahydrofolate + H(+). In terms of biological role, attaches a formyl group to the free amino group of methionyl-tRNA(fMet). The formyl group appears to play a dual role in the initiator identity of N-formylmethionyl-tRNA by promoting its recognition by IF2 and preventing the misappropriation of this tRNA by the elongation apparatus. This Campylobacter jejuni subsp. jejuni serotype O:6 (strain 81116 / NCTC 11828) protein is Methionyl-tRNA formyltransferase.